The chain runs to 410 residues: 3-phosphoshikimate 1-carboxyvinyltransferase (410 aa).

3-phosphoshikimate-binding residues include lysine 27, serine 28, and arginine 32. Lysine 27 is a phosphoenolpyruvate binding site. 2 residues coordinate phosphoenolpyruvate: glycine 91 and arginine 119. 3-phosphoshikimate is bound by residues serine 161, serine 162, glutamine 163, aspartate 297, glutamine 319, and lysine 323. A phosphoenolpyruvate-binding site is contributed by glutamine 163. The active-site Proton acceptor is aspartate 297. Residues arginine 327, arginine 368, and lysine 394 each contribute to the phosphoenolpyruvate site.

This sequence belongs to the EPSP synthase family. Monomer.

It is found in the cytoplasm. The catalysed reaction is 3-phosphoshikimate + phosphoenolpyruvate = 5-O-(1-carboxyvinyl)-3-phosphoshikimate + phosphate. The protein operates within metabolic intermediate biosynthesis; chorismate biosynthesis. Catalyzes the transfer of the enolpyruvyl moiety of phosphoenolpyruvate (PEP) to the 5-hydroxyl of shikimate-3-phosphate (S3P) to produce enolpyruvyl shikimate-3-phosphate and inorganic phosphate. The protein is 3-phosphoshikimate 1-carboxyvinyltransferase of Pyrococcus abyssi (strain GE5 / Orsay).